The sequence spans 358 residues: Peptide chain release factor 1 (358 aa).

Gln-233 bears the N5-methylglutamine mark.

It belongs to the prokaryotic/mitochondrial release factor family. Post-translationally, methylated by PrmC. Methylation increases the termination efficiency of RF1.

It localises to the cytoplasm. Functionally, peptide chain release factor 1 directs the termination of translation in response to the peptide chain termination codons UAG and UAA. The polypeptide is Peptide chain release factor 1 (Listeria innocua serovar 6a (strain ATCC BAA-680 / CLIP 11262)).